Here is an 896-residue protein sequence, read N- to C-terminus: Echinoderm microtubule-associated protein-like 3 (896 aa).

Met1 carries the post-translational modification N-acetylmethionine. The stretch at 16 to 43 forms a coiled coil; that stretch reads LQSLSQRLRVQEQEMELVKAALAEALRL. Positions 50 to 209 are disordered; sequence PSSLQGSGTP…GGPGSRRSNY (160 aa). Residues 77 to 88 are compositionally biased toward polar residues; it reads TPSLVSRGTQTE. The segment covering 134–145 has biased composition (pro residues); sequence PGPPGILRPLQP. The segment covering 154-163 has biased composition (low complexity); the sequence is RNSSSSSSPS. Positions 174 to 189 are enriched in polar residues; it reads AISSANLLVRSGSTES. 3 positions are modified to phosphoserine: Ser176, Ser198, and Ser204. WD repeat units follow at residues 234–286, 295–344, 350–392, 398–434, 448–487, 504–543, 549–584, 589–626, 629–667, 674–709, 716–755, 765–823, and 830–869; these read RSLE…LYRP, GGGQ…IWDS, LQEI…VWDC, LAEIKSTNDSVLAVGFNPRDSSCIVTSGKSHVHFWNW, RKQGVFGKYKKPKFIPCFVFLPDGDILTGDSEGNILTWGR, YGIVAQAHAHEGSIFALCLRRDGTVLSGGGRDRRLVQWGP, QEAEIPEHFGAVRAIAEGLGSELLVGTTKNALLRGD, FSPVIQGHTDELWGLCTHPSQNRFLTCGHDRQLCLWDG, HALAWSIDLKETGLCADFHPSGAVVAVGLNTGRWLVLDT, SDVIDGNEQLSVVRYSPDGLYLAIGSHDNVIYIYSV, SSRFGRCMGHSSFITHLDWSKDGNFIMSNSGDYEILYWDV, RYES…LFQY, and APSRMYGGHGSHVTSVRFTHDDSHLVSLGGKDASIFQWRV. Residues 876–896 form a disordered region; the sequence is GPAPATPSRTPSLSPASSLDV. The segment covering 877–896 has biased composition (low complexity); the sequence is PAPATPSRTPSLSPASSLDV. A Phosphothreonine; by CDK1 modification is found at Thr881. A Phosphoserine modification is found at Ser883.

Belongs to the WD repeat EMAP family. As to quaternary structure, homotrimer; self-association is mediated by the N-terminal coiled coil. Interacts with EML2 but not with EML1. Interacts (phosphorylated at Thr-881) with TUBG1, HAUS1, HAUS2, HAUS3, HAUS4, HAUS5, HAUS6, HAUS7 and HAUS8. Phosphorylation at Thr-881 during mitosis is required for interaction with TUBG1, HAUS1, HAUS2, HAUS3, HAUS4, HAUS5, HAUS6, HAUS7 and HAUS8 and their recruitment to spindle microtubules.

It localises to the cytoplasm. The protein localises to the cytoskeleton. Its subcellular location is the nucleus. It is found in the midbody. The protein resides in the spindle. Its function is as follows. Regulates mitotic spindle assembly, microtubule (MT)-kinetochore attachment and chromosome separation via recruitment of HAUS augmin-like complex and TUBG1 to the existing MTs and promoting MT-based MT nucleation. Required for proper alignnment of chromosomes during metaphase. The sequence is that of Echinoderm microtubule-associated protein-like 3 (EML3) from Homo sapiens (Human).